We begin with the raw amino-acid sequence, 346 residues long: Biotin synthase (346 aa).

One can recognise a Radical SAM core domain in the interval 41–265 (NEVQISTLLS…MMPHSYVRLS (225 aa)). The [4Fe-4S] cluster site is built by cysteine 56, cysteine 60, and cysteine 63. Residues cysteine 100, cysteine 131, cysteine 191, and arginine 263 each contribute to the [2Fe-2S] cluster site.

It belongs to the radical SAM superfamily. Biotin synthase family. Homodimer. The cofactor is [4Fe-4S] cluster. It depends on [2Fe-2S] cluster as a cofactor.

It carries out the reaction (4R,5S)-dethiobiotin + (sulfur carrier)-SH + 2 reduced [2Fe-2S]-[ferredoxin] + 2 S-adenosyl-L-methionine = (sulfur carrier)-H + biotin + 2 5'-deoxyadenosine + 2 L-methionine + 2 oxidized [2Fe-2S]-[ferredoxin]. Its pathway is cofactor biosynthesis; biotin biosynthesis; biotin from 7,8-diaminononanoate: step 2/2. Functionally, catalyzes the conversion of dethiobiotin (DTB) to biotin by the insertion of a sulfur atom into dethiobiotin via a radical-based mechanism. This Pseudoalteromonas translucida (strain TAC 125) protein is Biotin synthase.